Consider the following 78-residue polypeptide: UPF0291 protein SE_1024 (78 aa).

The interval 53–78 (TKVIDPEGNDVTPEKLKKIQEEKHNK) is disordered. The span at 64–78 (TPEKLKKIQEEKHNK) shows a compositional bias: basic and acidic residues.

This sequence belongs to the UPF0291 family.

The protein localises to the cytoplasm. This Staphylococcus epidermidis (strain ATCC 12228 / FDA PCI 1200) protein is UPF0291 protein SE_1024.